Here is an 815-residue protein sequence, read N- to C-terminus: MGNSPSTQDPSHSTKKEHGHHFHDAFNKDRQGSITSQLFNNRKSTHKRRASHTSEHNGAIPPRMQLLASHDPSTDCDGRMSSDTTIDKGPSHLFKKDYSLSSAADVNDTTLANLTLSDDHDVGAPEEQVKSPSFLSPGPSMATVKRTKSDLDDLSTLNYTMVDETTENERNDKPHHERHRSSIIALKKNLLESSATASPSPTRSSSVHSASLPALTKTDSIDIPVRQPYSKKPSIHAYQYQYLNNDETFSENSQMDKEGNSDSVDAEAGVLQSEDMVLNQSLLQNALKKDMQRLSRVNSSNSMYTAERISHANNNGNIENNTRNKGNAGGSNDDFTAPISATAKMMMKLYGDKTLMERDLNKHHNKTKKAQNKKIRSVSNSRRSSFASLHSLQSRKSILTNGLNLQPLHPLHPIINDNESQYSAPQHREISHHSNSMSSMSSISSTNSTENTLVVLKWKDDGTVAATTEVFIVSTDIASALKEQRELTLDENASLDSEKQLNPRIRMVYDDVHKEWFVPDLFLPAGIYRLQFSINGILTHSNFLPTATDSEGNFVNWFEVLPGYHTIEPFRNEADIDSQVEPTLDEELPKRPELKRFPSSSRKSSYYSAKGVERPSTPFSDYRGLSRSSSINMRDSFVRLKASSLDLMAEVKPERLVYSNEIPNLFNIGDGSTISVKGDSDDVHPQEPPSFTHRVVDCNQDDLFATLQQGGNIDAETAEAVFLSRYPVPDLPIYLNSSYLNRILNQSNQNSESHERDEGAINHIIPHVNLNHLLTSSIRDEIISVACTTRYEGKFITQVVYAPCYYKTQKSQISN.

The span at 1-11 shows a compositional bias: polar residues; sequence MGNSPSTQDPS. Disordered stretches follow at residues 1–88 and 117–146; these read MGNS…TIDK and SDDH…TVKR. Gly2 carries N-myristoyl glycine lipidation. The segment covering 12-31 has biased composition (basic and acidic residues); it reads HSTKKEHGHHFHDAFNKDRQ. Residues 32–42 show a composition bias toward polar residues; sequence GSITSQLFNNR. Position 33 is a phosphoserine (Ser33). Basic and acidic residues-rich tracts occupy residues 72–88 and 117–129; these read PSTD…TIDK and SDDH…EEQV. Phosphoserine is present on residues Ser181, Ser198, Ser200, Ser206, Ser209, and Ser220. Disordered regions lie at residues 311-335 and 362-389; these read HANN…NDDF and KHHN…FASL. The segment covering 313 to 326 has biased composition (low complexity); sequence NNNGNIENNTRNKG. Position 331 is a phosphoserine (Ser331). The span at 363 to 376 shows a compositional bias: basic residues; the sequence is HHNKTKKAQNKKIR. Residues 377–389 show a composition bias toward low complexity; sequence SVSNSRRSSFASL. Positions 473–716 are kinase-interacting sequence (KIS); required for interaction with SNF1; it reads VSTDIASALK…LQQGGNIDAE (244 aa). 2 positions are modified to phosphoserine: Ser494 and Ser497. Residues 581–616 are disordered; the sequence is EPTLDEELPKRPELKRFPSSSRKSSYYSAKGVERPS. The span at 587 to 596 shows a compositional bias: basic and acidic residues; it reads ELPKRPELKR. Over residues 599–608 the composition is skewed to low complexity; it reads SSSRKSSYYS. The residue at position 643 (Ser643) is a Phosphoserine. The segment at 724 to 804 is association with SNF1 kinase complex (ASC) domain; required for interaction with SNF4; it reads SRYPVPDLPI…FITQVVYAPC (81 aa).

This sequence belongs to the 5'-AMP-activated protein kinase beta subunit family. Component of the SNF1 kinase complex, a heterotrimeric complex composed of the catalytic alpha subunit SNF1, one of the three related beta subunits SIP1, SIP2 or GAL83, and the regulatory gamma subunit SNF4. The beta subunit serves as a bridge between the catalytic and the regulatory subunit. Interacts (via KIS domain) with SNF1. Interacts (via ASC domain) with SNF4. In terms of processing, phosphorylated by SNF1 in vitro.

It is found in the cytoplasm. It localises to the vacuole membrane. Beta subunit of the SNF1 kinase complex, which is required for transcriptional, metabolic, and developmental adaptations in response to glucose limitation. Has a structural role, mediating heterotrimer formation, and a regulatory role, defining carbon source-regulated subcellular location and substrate specificity of the SNF1 kinase complex. Promotes the PKA-regulated relocalization of the SNF1 kinase complex to the vacuolar membrane in response to various types of carbon stress. In Saccharomyces cerevisiae (strain ATCC 204508 / S288c) (Baker's yeast), this protein is SNF1 protein kinase subunit beta-1 (SIP1).